An 81-amino-acid chain; its full sequence is MKLTCMMIVAVLFLTASIFITADNSRNGIENLPRMRRHEMKKPKASKLNKRGCLPDEYFCGFSMIGALLCCSGWCLGICMT.

The N-terminal stretch at 1 to 22 (MKLTCMMIVAVLFLTASIFITA) is a signal peptide. Positions 23–51 (DNSRNGIENLPRMRRHEMKKPKASKLNKR) are excised as a propeptide. 3 disulfides stabilise this stretch: Cys-53/Cys-71, Cys-60/Cys-75, and Cys-70/Cys-79.

This sequence belongs to the conotoxin O1 superfamily. Expressed by the venom duct.

The protein resides in the secreted. In terms of biological role, omega-conotoxins act at presynaptic membranes, they bind and block voltage-gated calcium channels (Cav). The protein is Omega-conotoxin-like 3 of Conus imperialis (Imperial cone).